We begin with the raw amino-acid sequence, 602 residues long: Beta-(1--&gt;2)glucan export ATP-binding/permease protein NdvA (602 aa).

The region spanning 21 to 311 is the ABC transmembrane type-1 domain; sequence GWTLAVANLL…VVSFVNSLMM (291 aa). The next 6 helical transmembrane spans lie at 22 to 42, 68 to 88, 146 to 166, 167 to 187, 254 to 274, and 276 to 296; these read WTLA…PVLF, LLAA…TVAL, EHFA…YINW, RLAI…TLVV, VITR…GIAL, and QQGL…TLLI. An ABC transporter domain is found at 345–579; the sequence is VEFLDVSFSY…RGRFAELARA (235 aa). Residue 378 to 385 participates in ATP binding; sequence GATGAGKS.

This sequence belongs to the ABC transporter superfamily. Beta-(1--&gt;2)glucan exporter (TC 3.A.1.108.1) family. In terms of assembly, homodimer.

It localises to the cell inner membrane. The enzyme catalyses [(1-&gt;2)-beta-D-glucosyl](n)(in) + ATP + H2O = [(1-&gt;2)-beta-D-glucosyl](n)(out) + ADP + phosphate + H(+). Involved in beta-(1--&gt;2)glucan export. Transmembrane domains (TMD) form a pore in the inner membrane and the ATP-binding domain (NBD) is responsible for energy generation. In Rhodopseudomonas palustris (strain BisB5), this protein is Beta-(1--&gt;2)glucan export ATP-binding/permease protein NdvA.